A 394-amino-acid chain; its full sequence is Obg-like ATPase 1 (394 aa).

The 265-residue stretch at 21 to 285 (LKAGIVGLAN…MSPEDAEEEL (265 aa)) folds into the OBG-type G domain. Residue 30 to 35 (NVGKST) participates in ATP binding. Mg(2+) contacts are provided by Ser-34 and Thr-55. Phosphothreonine is present on Thr-89. Residue Lys-98 forms a Glycyl lysine isopeptide (Lys-Gly) (interchain with G-Cter in ubiquitin) linkage. Phosphoserine is present on residues Ser-116 and Ser-119. Leu-233 is a binding site for ATP. A TGS domain is found at 306 to 389 (DLISFFTCGP…EDGDIIYFRA (84 aa)).

This sequence belongs to the TRAFAC class OBG-HflX-like GTPase superfamily. OBG GTPase family. YchF/OLA1 subfamily. As to quaternary structure, monomer. Interacts with the 26S proteasome subunit RPT6. The cofactor is Mg(2+).

It localises to the cytoplasm. Functionally, hydrolyzes ATP, and can also hydrolyze GTP with lower efficiency. Has lower affinity for GTP. This is Obg-like ATPase 1 from Saccharomyces cerevisiae (strain ATCC 204508 / S288c) (Baker's yeast).